The chain runs to 155 residues: Myosin light chain alkali (155 aa).

2 consecutive EF-hand domains span residues 7 to 41 (REVE…LNLN) and 80 to 115 (GCYE…LGES).

Myosin is a hexamer of 2 heavy chains and 4 light chains.

The protein is Myosin light chain alkali (Mlc1) of Drosophila simulans (Fruit fly).